Consider the following 364-residue polypeptide: Probable endopolygalacturonase B (364 aa).

An N-terminal signal peptide occupies residues 1 to 20; the sequence is MHFFQSSLVAATMGAALVAA. The propeptide occupies 21 to 29; that stretch reads APAADLETR. A disulfide bridge links cysteine 32 with cysteine 47. N-linked (GlcNAc...) asparagine glycans are attached at residues asparagine 138 and asparagine 141. 6 PbH1 repeats span residues 159-188, 189-210, 211-231, 240-261, 269-291, and 303-324; these read SDHLTIKDVLLDNSAGTKLGHNTDAFDVGS, STYITIDGATVYNQDDCLAVNS, GEHITFTNGYCNGGHGLSIGS, VNDVTISNSQVINSQNGARIKT, VTGVKFQDISLKGITKYGIVVQQ, and TNGVKVSDITFEKVTGTVTSSA. Residue aspartate 203 is the Proton donor of the active site. An intrachain disulfide couples cysteine 205 to cysteine 221. Histidine 225 is a catalytic residue. Cysteine 331 and cysteine 336 are oxidised to a cystine. Asparagine 338 carries an N-linked (GlcNAc...) asparagine glycan. Cysteine 355 and cysteine 364 form a disulfide bridge.

The protein belongs to the glycosyl hydrolase 28 family.

The protein localises to the secreted. It carries out the reaction (1,4-alpha-D-galacturonosyl)n+m + H2O = (1,4-alpha-D-galacturonosyl)n + (1,4-alpha-D-galacturonosyl)m.. Its function is as follows. Involved in maceration and soft-rotting of plant tissue. Hydrolyzes the 1,4-alpha glycosidic bonds of de-esterified pectate in the smooth region of the plant cell wall. This is Probable endopolygalacturonase B (pgaB) from Aspergillus fumigatus (strain CBS 144.89 / FGSC A1163 / CEA10) (Neosartorya fumigata).